Here is a 394-residue protein sequence, read N- to C-terminus: Mannosyl-3-phosphoglycerate synthase (394 aa).

It belongs to the glycosyltransferase 2 family.

The protein localises to the cytoplasm. The catalysed reaction is (2R)-3-phosphoglycerate + GDP-alpha-D-mannose = 2-O-(alpha-D-mannosyl)-3-phosphoglycerate + GDP + H(+). Its pathway is carbohydrate biosynthesis; 2-(alpha-D-mannosyl)-D-glycerate biosynthesis; 2-(alpha-D-mannosyl)-D-glycerate from GDP-alpha-D-mannose (MPG route): step 1/2. Functionally, transfers a mannosyl group from GDP-mannose to phosphoglycerate to form mannosyl-3-phosphoglycerate (MPG). This Pyrococcus furiosus (strain ATCC 43587 / DSM 3638 / JCM 8422 / Vc1) protein is Mannosyl-3-phosphoglycerate synthase (mngA).